The sequence spans 261 residues: Proteasome subunit alpha (261 aa).

Residues 242–261 (NEENKKEEENREETKEKQEE) are disordered.

It belongs to the peptidase T1A family. In terms of assembly, the 20S proteasome core is composed of 14 alpha and 14 beta subunits that assemble into four stacked heptameric rings, resulting in a barrel-shaped structure. The two inner rings, each composed of seven catalytic beta subunits, are sandwiched by two outer rings, each composed of seven alpha subunits. The catalytic chamber with the active sites is on the inside of the barrel. Has a gated structure, the ends of the cylinder being occluded by the N-termini of the alpha-subunits. Is capped at one or both ends by the proteasome regulatory ATPase, PAN.

It localises to the cytoplasm. The formation of the proteasomal ATPase PAN-20S proteasome complex, via the docking of the C-termini of PAN into the intersubunit pockets in the alpha-rings, triggers opening of the gate for substrate entry. Interconversion between the open-gate and close-gate conformations leads to a dynamic regulation of the 20S proteasome proteolysis activity. Component of the proteasome core, a large protease complex with broad specificity involved in protein degradation. The M.jannaschii proteasome is able to cleave oligopeptides after Glu, Asp, Tyr, Phe, Trp, slightly after Arg, but not after Ala. Thus, displays caspase-like and chymotrypsin-like activities and low level of trypsin-like activity. This chain is Proteasome subunit alpha, found in Methanocaldococcus jannaschii (strain ATCC 43067 / DSM 2661 / JAL-1 / JCM 10045 / NBRC 100440) (Methanococcus jannaschii).